The sequence spans 231 residues: 4-aminobenzoate synthase (231 aa).

Residues glutamate 81, histidine 88, glutamate 142, histidine 174, aspartate 178, and histidine 181 each contribute to the Fe(2+) site.

It belongs to the CADD family. Homodimer. During infection, interacts with death domains of mammalian tumor necrosis factor (TNF) family receptors Fas, DR4, DR5 and to some extent TNFR1, but not with the respective downstream adapters. Fe(2+) serves as cofactor. Requires Mn(2+) as cofactor.

The protein resides in the secreted. It localises to the host cytoplasm. Its activity is regulated as follows. The protein is a cosubstrate rather than a true enzyme and is left in an inactive state after a single turnover. Inactive under anaerobic conditions. Functionally, involved in de novo para-aminobenzoate (PABA) biosynthesis. Acts as a self-sacrificing or 'suicide' enzyme that utilizes its own active site tyrosine residue(s) as the substrate for PABA synthesis. The side chain of the tyrosine residue is released from the protein backbone via cleavage of the C(alpha)-C(beta) bond, leaving a glycine in place of the original tyrosine residue. Reaction requires O(2) and a reduced dimetal cofactor. In terms of biological role, was also identified as a specific toxin that associates with death domains of tumor necrosis factor family (TNF) receptors and induces apoptosis in mammalian cell lines through a Caspase-dependent mechanism. In Chlamydia trachomatis serovar D (strain ATCC VR-885 / DSM 19411 / UW-3/Cx), this protein is 4-aminobenzoate synthase.